Reading from the N-terminus, the 725-residue chain is Ribonucleoside-diphosphate reductase subunit alpha (725 aa).

Residues Thr172, 188 to 189, Gly217, 397 to 401, and 599 to 603 each bind substrate; these read SC, NLCSE, and PTGSI. Cys189 and Cys426 are disulfide-bonded. Asn397 serves as the catalytic Proton acceptor. The active-site Cysteine radical intermediate is the Cys399. Residue Glu401 is the Proton acceptor of the active site.

The protein belongs to the ribonucleoside diphosphate reductase large chain family. Tetramer of two alpha and two beta subunits. Co-immunoprecipitates with DarG in the presence and absence of darT.

It catalyses the reaction a 2'-deoxyribonucleoside 5'-diphosphate + [thioredoxin]-disulfide + H2O = a ribonucleoside 5'-diphosphate + [thioredoxin]-dithiol. With respect to regulation, under complex allosteric control mediated by deoxynucleoside triphosphates and ATP binding. The type of nucleotide bound at the specificity site determines substrate preference. It seems probable that ATP makes the enzyme reduce CDP and UDP, dGTP favors ADP reduction and dTTP favors GDP reduction. CDP reduction is stimulated by dATP. Its function is as follows. Provides the precursors necessary for DNA synthesis. Catalyzes the biosynthesis of deoxyribonucleotides from the corresponding ribonucleotides. When coexpressed in E.coli with nrdF2 the 2 proteins complement a temperature-sensitive E.coli mutant, however coexpression with nrdF1 does not complement. The protein is Ribonucleoside-diphosphate reductase subunit alpha (nrdE) of Mycobacterium tuberculosis (strain ATCC 25618 / H37Rv).